The primary structure comprises 217 residues: Pyridoxine/pyridoxamine 5'-phosphate oxidase (217 aa).

Residues 13–16 (RREY) and Lys-71 each bind substrate. Residues 66–71 (RIVLLK), 81–82 (YT), Arg-87, Lys-88, and Gln-110 each bind FMN. Residues Tyr-128, Arg-132, and Ser-136 each contribute to the substrate site. Residues 145–146 (QS) and Trp-190 contribute to the FMN site. 196-198 (RLH) contacts substrate. Arg-200 lines the FMN pocket.

This sequence belongs to the pyridoxamine 5'-phosphate oxidase family. Homodimer. Requires FMN as cofactor.

It carries out the reaction pyridoxamine 5'-phosphate + O2 + H2O = pyridoxal 5'-phosphate + H2O2 + NH4(+). The catalysed reaction is pyridoxine 5'-phosphate + O2 = pyridoxal 5'-phosphate + H2O2. It participates in cofactor metabolism; pyridoxal 5'-phosphate salvage; pyridoxal 5'-phosphate from pyridoxamine 5'-phosphate: step 1/1. Its pathway is cofactor metabolism; pyridoxal 5'-phosphate salvage; pyridoxal 5'-phosphate from pyridoxine 5'-phosphate: step 1/1. In terms of biological role, catalyzes the oxidation of either pyridoxine 5'-phosphate (PNP) or pyridoxamine 5'-phosphate (PMP) into pyridoxal 5'-phosphate (PLP). The protein is Pyridoxine/pyridoxamine 5'-phosphate oxidase of Serratia proteamaculans (strain 568).